The primary structure comprises 856 residues: MSSDAPERFDPETGIAAEVETARIEREMEQSYIDYAMSVIAGRALPDARDGLKPVHRRILYAMHQSGISARSAHRKSSSIVGETMGDYHPHGDSAIYNALARMAQDFSMRNPLVDGQGNFGSVDGDPPAAMRYTEARMSPIAEELLDNIEMDTVEFTANYDDRLSEPAVLPAAFPNLLVNGSSGIAVGMSTNIPPHNLGEVIDATIHLIHHPECTVEDLMNHVQGPDFPTGANIVGQNAIYKAYKTGRGRVRVRAEFDVQDDRIVITELPFQTNKARLVERIADNVNAGTIEGIRDLRDESDRDGIRVVVELKRGANPDIVKNQLLEHHLESTFGVINLALVDGQPQVLTLKETLHEYLEHRRTVVRRRSQYELDEKRDRAHILEGRLRALEQVDDVVDIIRNSTDRDNAKAALRGEHVVESDERGESLPTFDFSEDQANHIVAMQLGSLTSLESDEIEDEYESVQERIERLQTILNNPDELDAVVEDELATIRDKYADERRTRIIEDDGTVTHEDLIAQEDVVVVVTEDDYIKRMSLEDFRSQHRGGKGIIGTSLKDGDTVSSVYVANTHDYLLYFTSHGQVYQLKTYQIPEMSRTARGKSAVNLLELDDGEQITAVVNTAEMDIDDDEERYFTMVTQSGYIKRTSVNSFQNIRSTGIIAISLGADDKLIDVEVTDGNRDIILGTRKGMAIRFNEGDVRSVGRSARGVHGIKLEDTDAVAALAAVDDDQDDWVLTVTEHGYGKRTDIDRYRQQSRNGKGLIDIKTNERNGHVCEVETVGISDELFMMSRKGQILRTPVDDISTVGRNTMGVIVMDLEDTDTVASVDTHPRTDDSSEADSGDGESESENATATTPS.

One can recognise a Topo IIA-type catalytic domain in the interval 45–517; the sequence is LPDARDGLKP…DDGTVTHEDL (473 aa). Tyr133 (O-(5'-phospho-DNA)-tyrosine intermediate) is an active-site residue. The short motif at 544–550 is the GyrA-box element; it reads QHRGGKG. The interval 822–856 is disordered; it reads TVASVDTHPRTDDSSEADSGDGESESENATATTPS. The span at 835–847 shows a compositional bias: acidic residues; that stretch reads SSEADSGDGESES.

Belongs to the type II topoisomerase GyrA/ParC subunit family. Heterotetramer, composed of two GyrA and two GyrB chains. In the heterotetramer, GyrA contains the active site tyrosine that forms a transient covalent intermediate with DNA, while GyrB binds cofactors and catalyzes ATP hydrolysis.

Its subcellular location is the cytoplasm. It catalyses the reaction ATP-dependent breakage, passage and rejoining of double-stranded DNA.. Functionally, a type II topoisomerase that negatively supercoils closed circular double-stranded (ds) DNA in an ATP-dependent manner to modulate DNA topology and maintain chromosomes in an underwound state. Negative supercoiling favors strand separation, and DNA replication, transcription, recombination and repair, all of which involve strand separation. Also able to catalyze the interconversion of other topological isomers of dsDNA rings, including catenanes and knotted rings. Type II topoisomerases break and join 2 DNA strands simultaneously in an ATP-dependent manner. This chain is DNA gyrase subunit A, found in Haloquadratum walsbyi (strain DSM 16790 / HBSQ001).